Here is a 203-residue protein sequence, read N- to C-terminus: ATP-dependent Clp protease proteolytic subunit 1 (203 aa).

The active-site Nucleophile is Ser-101. His-126 is an active-site residue.

Belongs to the peptidase S14 family. In terms of assembly, fourteen ClpP subunits assemble into 2 heptameric rings which stack back to back to give a disk-like structure with a central cavity, resembling the structure of eukaryotic proteasomes.

It localises to the cytoplasm. The catalysed reaction is Hydrolysis of proteins to small peptides in the presence of ATP and magnesium. alpha-casein is the usual test substrate. In the absence of ATP, only oligopeptides shorter than five residues are hydrolyzed (such as succinyl-Leu-Tyr-|-NHMec, and Leu-Tyr-Leu-|-Tyr-Trp, in which cleavage of the -Tyr-|-Leu- and -Tyr-|-Trp bonds also occurs).. Its function is as follows. Cleaves peptides in various proteins in a process that requires ATP hydrolysis. Has a chymotrypsin-like activity. Plays a major role in the degradation of misfolded proteins. This chain is ATP-dependent Clp protease proteolytic subunit 1, found in Synechococcus sp. (strain JA-2-3B'a(2-13)) (Cyanobacteria bacterium Yellowstone B-Prime).